The following is a 1966-amino-acid chain: Dedicator of cytokinesis protein 4 (1966 aa).

The region spanning 6 to 67 (EHEKYGVVIA…PSSYVHLKNA (62 aa)) is the SH3 domain. The residue at position 167 (Tyr167) is a Phosphotyrosine. A Phosphothreonine modification is found at Thr193. The region spanning 401 to 574 (RNDLYITIER…ESFCITSFLC (174 aa)) is the C2 DOCK-type domain. Positions 1190–1596 (KTELNKEEMY…LGIQEFSACM (407 aa)) constitute a DOCKER domain. A phosphoserine mark is found at Ser1599, Ser1607, Ser1614, Ser1618, Ser1620, and Ser1631. Disordered stretches follow at residues 1648-1729 (SQAS…IYPT) and 1742-1966 (IGDG…VSQL). Low complexity predominate over residues 1672–1703 (PSPSTSSLSSTHSASPNVTSSAPSSARASPLL). At Ser1769 the chain carries Phosphoserine. An SH3-binding motif is present at residues 1788-1794 (PPVPPRP). Residues 1795-1809 (TQTASPARHTTSVSP) are compositionally biased toward polar residues. Over residues 1838 to 1863 (SNSPVLSGSYSSGISSLSRCSTSETS) the composition is skewed to low complexity. Polar residues predominate over residues 1864 to 1873 (GFENQVNEQS). The span at 1941–1954 (SHLENGARRTDPGP) shows a compositional bias: basic and acidic residues.

The protein belongs to the DOCK family. As to quaternary structure, interacts with nucleotide-free Rap1; functions as a guanine nucleotide exchange factor (GEF) for Rap1. Interacts (via DOCKER domain) with RAC1; functions as a guanine nucleotide exchange factor (GEF) for RAC1. Interacts with the SH3 domain of CRK. Interacts with FASLG. Interacts with ELMO2 and EPHA2; mediates activation of RAC1 by EPHA2. Interacts with USH1C (via PDZ 1 domain). As to expression, widely expressed at low level. Highly expressed in skeletal muscle, prostate and ovary. In terms of tissue distribution, may be specifically expressed in the brain and eye.

Its subcellular location is the cell membrane. It is found in the cell projection. The protein localises to the cytoplasm. It localises to the cytosol. Functions as a guanine nucleotide exchange factor (GEF) that promotes the exchange of GDP to GTP, converting inactive GDP-bound small GTPases into their active GTP-bound form. Involved in regulation of adherens junction between cells. Plays a role in cell migration. Functionally, has a higher guanine nucleotide exchange factor activity compared to other isoforms. The chain is Dedicator of cytokinesis protein 4 (DOCK4) from Homo sapiens (Human).